Consider the following 776-residue polypeptide: Cullin-1 (776 aa).

Arg-63 is subject to Omega-N-methylarginine. A Cullin neddylation domain is found at 706–766 (DRKLLIQAAI…IEKEYLERVD (61 aa)). Residue Lys-720 forms a Glycyl lysine isopeptide (Lys-Gly) (interchain with G-Cter in NEDD8) linkage.

This sequence belongs to the cullin family. Component of multiple Cul1-RING E3 ubiquitin-protein ligase complexes commonly known as SCF (SKP1-CUL1-F-box) complexes, consisting of CUL1, SKP1, RBX1 and a variable F-box domain-containing protein as substrate-specific subunit. Component of the SCF(FBXW11) complex containing FBXW11. Component of the SCF(SKP2) complex containing SKP2, in which it interacts directly with SKP1, SKP2 and RBX1. Component of the SCF(FBXW2) complex containing FBXW2. Component of the SCF(FBXO32) complex containing FBXO32. Component of the probable SCF(FBXO7) complex containing FBXO7. Component of the SCF(FBXO10) complex containing FBXO10. Component of the SCF(FBXO11) complex containing FBXO11. Component of the SCF(FBXO25) complex containing FBXO25. Component of the SCF(FBXO33) complex containing FBXO33. Component of the probable SCF(FBXO4) complex containing FBXO4. Component of the SCF(FBXO44) complex, composed of SKP1, CUL1 and FBXO44. Component of the SCF(BTRC) complex, composed of SKP1, CUL1 and BTRC. This complex binds phosphorylated NFKBIA. Part of a SCF complex consisting of CUL1, RBX1, SKP1 and FBXO2. Component of a SCF(SKP2)-like complex containing CUL1, SKP1, TRIM21 and SKP2. Component of the SCF(FBXO17) complex, composed of SKP1, CUL1 and FBXO17. Component of the SCF(FBXO27) complex, composed of SKP1, CUL1 and FBXO27. Component of the SCF(CCNF) complex consisting of CUL1, RBX1, SKP1 and CCNF. Interacts with CCNF. Component of the SCF(FBXL3) complex composed of CUL1, SKP1, RBX1 and FBXL3. Component of the SCF(FBXL21) complex composed of CUL1, SKP1, RBX1 and FBXL21. Component of the SCF(FBXO9) composed of CUL1, SKP1, RBX1 and FBXO9. Component of the SCF(FBXW7) composed of CUL1, SKP1, RBX1 and FBXW7. Component of the SCF(FBXO31) complex composed of CUL1, SKP1, RBX1 and FBXO31. Interacts with CHEK2; mediates CHEK2 ubiquitination and regulates its function. Part of a complex with TIP120A/CAND1 and RBX1. The unneddylated form interacts with TIP120A/CAND1 and the interaction mediates the exchange of the F-box substrate-specific subunit. Can self-associate. Interacts with FBXW8. Interacts with RNF7. Interacts with TRIM21. Interacts with COPS2. Interacts with UBE2M. Identified in a complex with RBX1 and GLMN. Interacts with CEP68 as part of the SCF(FBXW11) complex; the interaction is probably mediated by FBXW11 and the complex also contains CDK5RAP2 and PCNT. Interacts (when neddylated) with ARIH1; leading to activate the E3 ligase activity of ARIH1. Interacts with COPS9 isoform 2. Interacts with UBXN1. Interacts with KAT7, probably as part of an SCF complex; the interaction mediates KAT7 ubiquitination. Interacts with NOTCH2. Part of a complex that contains DCUN1D5, CUL1 and RBX1; this complex is bridged by CUL1. Interacts (unneddylated form) with DCUN1D1, DCUN1D2, DCUN1D3, DCUN1D4 and DCUN1D5; these interactions promote the cullin neddylation. Interacts (via the C-terminal domain) with CUL7; the interaction seems to be mediated by FBXW8; it is likely specific to FBXW8, but not other F-box proteins. Interacts with UBR2, as part of SCF(BTRC) complex; the interaction mediates 'Lys-48'-linked ubiquitination of UBR2 and is regulated by DUSP22 in the T-cell receptor signaling pathway. In terms of assembly, (Microbial infection) Interacts with Epstein-Barr virus BPLF1. As to quaternary structure, (Microbial infection) Interacts with Human adenovirus early E1A protein; this interaction inhibits RBX1-CUL1-dependent elongation reaction of ubiquitin chains by the SCF(FBXW7) complex. (Microbial infection) Interacts with vaccinia virus protein C9L. In terms of assembly, (Microbial infection) Interacts with Epstein-Barr virus (EBV) tegument protein BGLF2; this interaction might facilitate CUL1 recruitment to STAT2, leading to ubiquitination and degradation of the latter. Neddylated; which enhances the ubiquitination activity of SCF. Neddylation prevents binding of the inhibitor CAND1. Neddylation leads to structural rearrangment in the complex that allows interaction between the E2 ubiquitin-conjugating enzyme and the acceptor ubiquitin. Deneddylated via its interaction with the COP9 signalosome (CSN) complex. Post-translationally, (Microbial infection) Deneddylated by Epstein-Barr virus BPLF1 leading to a S-phase-like environment that is required for efficient replication of the viral genome. In terms of tissue distribution, expressed in lung fibroblasts.

The protein operates within protein modification; protein ubiquitination. Core component of multiple cullin-RING-based SCF (SKP1-CUL1-F-box protein) E3 ubiquitin-protein ligase complexes, which mediate the ubiquitination of proteins involved in cell cycle progression, signal transduction and transcription. SCF complexes and ARIH1 collaborate in tandem to mediate ubiquitination of target proteins. In the SCF complex, serves as a rigid scaffold that organizes the SKP1-F-box protein and RBX1 subunits. May contribute to catalysis through positioning of the substrate and the ubiquitin-conjugating enzyme. The E3 ubiquitin-protein ligase activity of the complex is dependent on the neddylation of the cullin subunit and exchange of the substrate recognition component is mediated by TIP120A/CAND1. The functional specificity of the SCF complex depends on the F-box protein as substrate recognition component. SCF(BTRC) and SCF(FBXW11) direct ubiquitination of CTNNB1 and participate in Wnt signaling. SCF(FBXW11) directs ubiquitination of phosphorylated NFKBIA. SCF(BTRC) directs ubiquitination of NFKBIB, NFKBIE, ATF4, SMAD3, SMAD4, CDC25A, FBXO5 and probably NFKB2. SCF(BTRC) and/or SCF(FBXW11) direct ubiquitination of CEP68. SCF(SKP2) directs ubiquitination of phosphorylated CDKN1B/p27kip and is involved in regulation of G1/S transition. SCF(SKP2) directs ubiquitination of ORC1, CDT1, RBL2, ELF4, CDKN1A, RAG2, FOXO1A, and probably MYC and TAL1. SCF(FBXW7) directs ubiquitination of CCNE1, NOTCH1 released notch intracellular domain (NICD), and probably PSEN1. SCF(FBXW2) directs ubiquitination of GCM1. SCF(FBXO32) directs ubiquitination of MYOD1. SCF(FBXO7) directs ubiquitination of BIRC2 and DLGAP5. SCF(FBXO33) directs ubiquitination of YBX1. SCF(FBXO1) directs ubiquitination of BCL6 and DTL but does not seem to direct ubiquitination of TP53. SCF(BTRC) mediates the ubiquitination of NFKBIA at 'Lys-21' and 'Lys-22'; the degradation frees the associated NFKB1-RELA dimer to translocate into the nucleus and to activate transcription. SCF(CCNF) directs ubiquitination of CCP110. SCF(FBXL3) and SCF(FBXL21) direct ubiquitination of CRY1 and CRY2. SCF(FBXO9) directs ubiquitination of TTI1 and TELO2. SCF(FBXO10) directs ubiquitination of BCL2. Neddylated CUL1-RBX1 ubiquitinates p53/TP53 recruited by Cul7-RING(FBXW8) complex. SCF(BTRC) directs 'Lys-48'-linked ubiquitination of UBR2 in the T-cell receptor signaling pathway. The SCF(FBXO31) protein ligase complex specifically mediates the ubiquitination of proteins amidated at their C-terminus in response to oxidative stress. The sequence is that of Cullin-1 (CUL1) from Homo sapiens (Human).